Here is a 258-residue protein sequence, read N- to C-terminus: SMH class II histocompatibility antigen, beta-1 chain (258 aa).

An N-terminal signal peptide occupies residues 1 to 29; that stretch reads MMVLPVPVAPWTAALTVLLMVLNKSVVQG. Residues 30–121 form a beta-1 region; it reads RTTPENYLFR…LNQRLSQSLI (92 aa). Residues 30–225 are Extracellular-facing; sequence RTTPENYLFR…RAQSDSARNK (196 aa). 2 cysteine pairs are disulfide-bonded: cysteine 44–cysteine 106 and cysteine 144–cysteine 200. The interval 122 to 215 is beta-2; that stretch reads AQPKVHVSPS…SLDRPITVEW (94 aa). In terms of domain architecture, Ig-like C1-type spans 124–212; the sequence is PKVHVSPSKG…EHPSLDRPIT (89 aa). Residues 216–225 form a connecting peptide region; that stretch reads RAQSDSARNK. An N-linked (GlcNAc...) asparagine glycan is attached at asparagine 224. The chain crosses the membrane as a helical span at residues 226–246; it reads TLTGVGGLVLGLIFLAVGLIM. Over 247–258 the chain is Cytoplasmic; sequence HVRSKKAQRGSR.

This sequence belongs to the MHC class II family.

The protein resides in the membrane. The protein is SMH class II histocompatibility antigen, beta-1 chain of Spalax ehrenbergi (Middle East blind mole rat).